Consider the following 154-residue polypeptide: Large ribosomal subunit protein uL30 (154 aa).

The protein belongs to the universal ribosomal protein uL30 family. Part of the 50S ribosomal subunit.

This chain is Large ribosomal subunit protein uL30, found in Methanococcus vannielii.